The sequence spans 338 residues: Phosphoribosylformylglycinamidine cyclo-ligase (338 aa).

Belongs to the AIR synthase family.

The protein resides in the cytoplasm. The catalysed reaction is 2-formamido-N(1)-(5-O-phospho-beta-D-ribosyl)acetamidine + ATP = 5-amino-1-(5-phospho-beta-D-ribosyl)imidazole + ADP + phosphate + H(+). The protein operates within purine metabolism; IMP biosynthesis via de novo pathway; 5-amino-1-(5-phospho-D-ribosyl)imidazole from N(2)-formyl-N(1)-(5-phospho-D-ribosyl)glycinamide: step 2/2. In Lactococcus lactis subsp. lactis (strain IL1403) (Streptococcus lactis), this protein is Phosphoribosylformylglycinamidine cyclo-ligase.